The sequence spans 204 residues: Thymidylate kinase (204 aa).

10–17 (GGDGAGKT) contributes to the ATP binding site.

This sequence belongs to the thymidylate kinase family.

It catalyses the reaction dTMP + ATP = dTDP + ADP. In terms of biological role, phosphorylation of dTMP to form dTDP in both de novo and salvage pathways of dTTP synthesis. The polypeptide is Thymidylate kinase (Cutibacterium acnes (strain DSM 16379 / KPA171202) (Propionibacterium acnes)).